The following is a 122-amino-acid chain: MSLTNEQIIEAIASKSVSEIVELITAMEEKFGVSAAAAAVAVAAGPAEAAEEKTEFDVILADAGANKVAVIKAVRGATGLGLKEAKDLVESAPAALKEGISKGEAEALKKELEEAGAKVEIK.

The protein belongs to the bacterial ribosomal protein bL12 family. In terms of assembly, homodimer. Part of the ribosomal stalk of the 50S ribosomal subunit. Forms a multimeric L10(L12)X complex, where L10 forms an elongated spine to which 2 to 4 L12 dimers bind in a sequential fashion. Binds GTP-bound translation factors.

Its function is as follows. Forms part of the ribosomal stalk which helps the ribosome interact with GTP-bound translation factors. Is thus essential for accurate translation. The polypeptide is Large ribosomal subunit protein bL12 (Glaesserella parasuis serovar 5 (strain SH0165) (Haemophilus parasuis)).